Reading from the N-terminus, the 359-residue chain is tRNA-specific 2-thiouridylase MnmA (359 aa).

ATP is bound by residues 6–13 (AMSGGVDS) and leucine 32. Cysteine 97 functions as the Nucleophile in the catalytic mechanism. Residues cysteine 97 and cysteine 195 are joined by a disulfide bond. Glycine 121 provides a ligand contact to ATP. The interval 144 to 146 (KDQ) is interaction with tRNA. Cysteine 195 (cysteine persulfide intermediate) is an active-site residue.

The protein belongs to the MnmA/TRMU family.

It localises to the cytoplasm. It catalyses the reaction S-sulfanyl-L-cysteinyl-[protein] + uridine(34) in tRNA + AH2 + ATP = 2-thiouridine(34) in tRNA + L-cysteinyl-[protein] + A + AMP + diphosphate + H(+). In terms of biological role, catalyzes the 2-thiolation of uridine at the wobble position (U34) of tRNA, leading to the formation of s(2)U34. The sequence is that of tRNA-specific 2-thiouridylase MnmA from Tropheryma whipplei (strain TW08/27) (Whipple's bacillus).